We begin with the raw amino-acid sequence, 151 residues long: UPF0208 membrane protein YPTB2595 (151 aa).

The next 2 membrane-spanning stretches (helical) occupy residues 46–66 (FGIRFMPPLAIFTLTWQIALG) and 69–89 (LGPAIATALFACGLPLQGLWW).

It belongs to the UPF0208 family.

Its subcellular location is the cell inner membrane. The polypeptide is UPF0208 membrane protein YPTB2595 (Yersinia pseudotuberculosis serotype I (strain IP32953)).